A 2569-amino-acid polypeptide reads, in one-letter code: Highly reducing polyketide synthase pks5 (2569 aa).

The tract at residues 1 to 25 (MVVKFANGVRNRGNGDEGQRGTQRP) is disordered. Residues 27–452 (STPIAIVGMS…GTNVHVIMEA (426 aa)) enclose the Ketosynthase family 3 (KS3) domain. Residues C200, H335, and H375 each act as for beta-ketoacyl synthase activity in the active site. Residues 572–892 (IFNGQGAQWY…PYLSCLRRNI (321 aa)) are malonyl-CoA:ACP transacylase (MAT) domain. An N-terminal hotdog fold region spans residues 960–1097 (HELLGSSVPG…GYVSAEDSSK (138 aa)). Residues 960 to 1268 (HELLGSSVPG…LRLQKIQAED (309 aa)) form a dehydratase (DH) domain region. A PKS/mFAS DH domain is found at 960–1270 (HELLGSSVPG…LQKIQAEDDN (311 aa)). The Proton acceptor; for dehydratase activity role is filled by H992. Positions 1117 to 1270 (RVRHVRPDAM…LQKIQAEDDN (154 aa)) are C-terminal hotdog fold. The Proton donor; for dehydratase activity role is filled by D1179. The interval 1457–1567 (LEVGAGTGGA…RKLLKPKGKL (111 aa)) is methyltransferase (CMet) domain. Residues 1855-2170 (DLLNKIEFLE…SGTHMGKIVL (316 aa)) form an enoyl reductase (ER) domain region. The interval 2195–2371 (THLIVGGLRG…AISINLGPVD (177 aa)) is ketoreductase (KR) domain. The region spanning 2485–2562 (AARKLVSELI…DFAALVASRS (78 aa)) is the Carrier domain. Position 2522 is an O-(pantetheine 4'-phosphoryl)serine (S2522).

Highly reducing polyketide synthase; part of the gene cluster that mediates the biosynthesis of abscisic acid (ABA), a phytohormone that acts antagonistically toward salicylic acid (SA), jasmonic acid (JA) and ethylene (ETH) signaling, to impede plant defense responses. The first step of the pathway catalyzes the reaction from farnesyl diphosphate to alpha-ionylideneethane performed by the alpha-ionylideneethane synthase abl3 via a three-step reaction mechanism involving 2 neutral intermediates, beta-farnesene and allofarnesene. The cytochrome P450 monooxygenase abl1 might then be involved in the conversion of alpha-ionylideneethane to alpha-ionylideneacetic acid. Alpha-ionylideneacetic acid is further converted to abscisic acid in 2 steps involving the cytochrome P450 monooxygenase abl2 and the short-chain dehydrogenase/reductase abl4, via the intermediates 1'-deoxy-ABA or 1',4'-trans-diol-ABA, depending on the order of action of these 2 enzymes. Abl2 is responsible for the hydroxylation of carbon atom C-1' and abl4 might be involved in the oxidation of the C-4' carbon atom. Pks5 is clearly not involved in the production of ABA. Nonetheless, the possibility cannot be excluded that pks5 may modify ABA into another compound. It also cannot be excluded the possibility that pks5 also has a function completely independent of ABA synthesis. Pks5 is not required for pathogenicity on B.napus cotyledon. This is Highly reducing polyketide synthase pks5 from Leptosphaeria maculans (strain JN3 / isolate v23.1.3 / race Av1-4-5-6-7-8) (Blackleg fungus).